Reading from the N-terminus, the 274-residue chain is NAD(P)H dehydrogenase [quinone] 1 (274 aa).

FAD contacts are provided by residues H12, 18 to 19, and Q67; that span reads FN. S82 is subject to Phosphoserine. 104 to 107 serves as a coordination point for FAD; the sequence is LQWF. 126–128 contacts substrate; that stretch reads AYT. FAD-binding positions include 148-151, Y156, and R201; that span reads TTGG. The tract at residues 225–274 is important for apoenzyme conformational stability; that stretch reads PSSLFDLNFQAGFLMKKEVQDEEKNKKFGLSVGHHLGKSIPTDNQIKARK. Glycyl lysine isopeptide (Lys-Gly) (interchain with G-Cter in SUMO2) cross-links involve residues K250 and K251.

It belongs to the NAD(P)H dehydrogenase (quinone) family. Homodimer. Interacts with PDLIM4 isoform 2; this interaction stabilizes PDLIM4 isoform 2 in response to oxidative stress and protects it from ubiquitin-independent degradation by the core 20S proteasome. Interacts with TP73 (via SAM domain); this interaction is NADH-dependent, stabilizes TP73 in response to oxidative stress and protects it from ubiquitin-independent degradation by the 20S proteasome. Interacts with TP53; this interaction is NADH-dependent, stabilizes TP53 in response to oxidative stress and protects it from ubiquitin-independent degradation by the 20S proteasome. FAD serves as cofactor.

It localises to the cytoplasm. Its subcellular location is the cytosol. The enzyme catalyses a quinone + NADH + H(+) = a quinol + NAD(+). It catalyses the reaction a quinone + NADPH + H(+) = a quinol + NADP(+). The catalysed reaction is ubiquinone-10 + NADH + H(+) = ubiquinol-10 + NAD(+). It carries out the reaction menadione + NADH + H(+) = menadiol + NAD(+). Inhibited by dicoumarol. Functionally, flavin-containing quinone reductase that catalyzes two-electron reduction of quinones to hydroquinones using either NADH or NADPH as electron donors. In a ping-pong kinetic mechanism, the electrons are sequentially transferred from NAD(P)H to flavin cofactor and then from reduced flavin to the quinone, bypassing the formation of semiquinone and reactive oxygen species. Regulates cellular redox state primarily through quinone detoxification. Reduces components of plasma membrane redox system such as coenzyme Q and vitamin quinones, producing antioxidant hydroquinone forms. In the process may function as superoxide scavenger to prevent hydroquinone oxidation and facilitate excretion. Alternatively, can activate quinones and their derivatives by generating redox reactive hydroquinones with DNA cross-linking antitumor potential. Acts as a gatekeeper of the core 20S proteasome known to degrade proteins with unstructured regions. Upon oxidative stress, interacts with tumor suppressors TP53 and TP73 in a NADH-dependent way and inhibits their ubiquitin-independent degradation by the 20S proteasome. This Homo sapiens (Human) protein is NAD(P)H dehydrogenase [quinone] 1.